The primary structure comprises 315 residues: Acetyl-coenzyme A carboxylase carboxyl transferase subunit alpha (315 aa).

The CoA carboxyltransferase C-terminal domain occupies 38 to 292; the sequence is RLQKKSNELT…KLRLKEDLAE (255 aa).

The protein belongs to the AccA family. Acetyl-CoA carboxylase is a heterohexamer composed of biotin carboxyl carrier protein (AccB), biotin carboxylase (AccC) and two subunits each of ACCase subunit alpha (AccA) and ACCase subunit beta (AccD).

It localises to the cytoplasm. It catalyses the reaction N(6)-carboxybiotinyl-L-lysyl-[protein] + acetyl-CoA = N(6)-biotinyl-L-lysyl-[protein] + malonyl-CoA. The protein operates within lipid metabolism; malonyl-CoA biosynthesis; malonyl-CoA from acetyl-CoA: step 1/1. Its function is as follows. Component of the acetyl coenzyme A carboxylase (ACC) complex. First, biotin carboxylase catalyzes the carboxylation of biotin on its carrier protein (BCCP) and then the CO(2) group is transferred by the carboxyltransferase to acetyl-CoA to form malonyl-CoA. This Haemophilus influenzae (strain PittEE) protein is Acetyl-coenzyme A carboxylase carboxyl transferase subunit alpha.